Reading from the N-terminus, the 150-residue chain is Cell division protein SepF (150 aa).

This sequence belongs to the SepF family. As to quaternary structure, homodimer. Interacts with FtsZ.

It localises to the cytoplasm. Its function is as follows. Cell division protein that is part of the divisome complex and is recruited early to the Z-ring. Probably stimulates Z-ring formation, perhaps through the cross-linking of FtsZ protofilaments. Its function overlaps with FtsA. The protein is Cell division protein SepF of Clostridium botulinum (strain ATCC 19397 / Type A).